We begin with the raw amino-acid sequence, 64 residues long: Large ribosomal subunit protein bL32 (64 aa).

It belongs to the bacterial ribosomal protein bL32 family.

The protein is Large ribosomal subunit protein bL32 of Bifidobacterium longum (strain DJO10A).